The sequence spans 663 residues: Zinc finger protein 44 (663 aa).

A KRAB domain is found at 52–138 (VAFEDVAVNF…GETLSQIRNS (87 aa)). The C2H2-type 1; atypical zinc-finger motif lies at 189 to 211 (YTHKQCGKGLSYRHSFQTCERPH). The C2H2-type 2; degenerate zinc-finger motif lies at 217-239 (YDCKECGKTFSSPGNLRRHMVVK). 15 C2H2-type zinc fingers span residues 245–267 (YKCE…ERTH), 273–295 (YECK…EKIH), 301–323 (YECK…ERTH), 329–351 (YKCK…ERIH), 357–379 (YTCK…MIMH), 385–407 (HKCK…EGTH), 413–435 (YECK…MMAH), 441–463 (HKCT…ERTH), 469–491 (YECK…ETTH), 497–518 (YKCK…ETTH), 524–546 (YECK…ERTH), 552–574 (YECQ…ERTH), 580–602 (YECK…ERTH), 608–630 (YECK…ERTH), and 636–658 (YECK…KRTH).

It belongs to the krueppel C2H2-type zinc-finger protein family.

It is found in the nucleus. In terms of biological role, may be involved in transcriptional regulation. The sequence is that of Zinc finger protein 44 (ZNF44) from Homo sapiens (Human).